A 191-amino-acid polypeptide reads, in one-letter code: Apoptosis regulator BHRF1 (191 aa).

Residues 1–18 (MAYSTREILLALCIRDSR) form an interaction with host VRK2 region. The N-linked (GlcNAc...) asparagine; by host glycan is linked to Asn22. The BH1 motif lies at 89–109 (EIFHRGDPSLGRALAWMAWCM). Positions 89-142 (EIFHRGDPSLGRALAWMAWCMHACRTLCCNQSTPYYVVDLSVRGMLEASEGLDG) are interaction with host VRK2. Asn118 is a glycosylation site (N-linked (GlcNAc...) asparagine; by host). The BH2 motif lies at 142–157 (GWIHQQGGWSTLIEDN). Residues 166–186 (WTLFLAGLTLSLLVICSYLFI) form a helical membrane-spanning segment.

It belongs to the Bcl-2 family. As to quaternary structure, interacts with isoform 1 of host VRK2; this interaction is involved in protecting cells from apoptosis. Interacts with host PRA1; this interaction seems to modulate BHRF1 anti-apoptotic activity. Interacts with host BCL2L11. Interacts with host BAD and BBC3. Interacts with BALF1; BALF1 acting as a negative regulator of the survival function of BHRF1. Interacts with host BECN1.

Its subcellular location is the host membrane. It is found in the host mitochondrion. In terms of biological role, prevents premature death of the host cell during virus production, which would otherwise reduce the amount of progeny virus. Acts as a host B-cell leukemia/lymphoma 2 (Bcl-2) homolog, and interacts with pro-apoptotic proteins to prevent mitochondria permeabilization, release of cytochrome c and subsequent apoptosis of the host cell. In addition, plays a role in the inhibiton of host BECN1-mediated starvation-induced autophagy without affecting basal levels of autophagy. The chain is Apoptosis regulator BHRF1 from Homo sapiens (Human).